Reading from the N-terminus, the 278-residue chain is Large ribosomal subunit protein uL2 (278 aa).

The segment at 222–264 (GVAMNPIDHPHGGGEGRTSGGRHPVTPWGKPTKGRKTRKNKAT) is disordered.

Belongs to the universal ribosomal protein uL2 family. Part of the 50S ribosomal subunit. Forms a bridge to the 30S subunit in the 70S ribosome.

One of the primary rRNA binding proteins. Required for association of the 30S and 50S subunits to form the 70S ribosome, for tRNA binding and peptide bond formation. It has been suggested to have peptidyltransferase activity; this is somewhat controversial. Makes several contacts with the 16S rRNA in the 70S ribosome. This is Large ribosomal subunit protein uL2 from Phenylobacterium zucineum (strain HLK1).